The following is a 1094-amino-acid chain: Formin-like protein 1 (1094 aa).

Disordered regions lie at residues 1–29 (MGNAAGSAEQPAGPTASPPKQPAVPKQPM), 173–199 (SGAEKSKPLDQSVEDLSKAPPSSVPKS), and 507–627 (AATP…GVKA). Residue Gly2 is the site of N-myristoyl glycine attachment. Residue Ser7 is modified to Phosphoserine. Pro residues predominate over residues 16-28 (ASPPKQPAVPKQP). A GBD/FH3 domain is found at 27-464 (QPMPAAGELE…SRRIPEPEKV (438 aa)). Residue Ser184 is modified to Phosphoserine. The segment covering 519–529 (RVSTDSPSTAE) has biased composition (polar residues). Composition is skewed to pro residues over residues 535-549 (ASPPPPPPPPPPPLP) and 559-610 (PSAP…PGGP). The 392-residue stretch at 627 to 1018 (AKKPIQTKFR…DTSGREEPPT (392 aa)) folds into the FH2 domain. At Ser688 the chain carries Phosphoserine. Basic and acidic residues predominate over residues 1002–1017 (WKKEAAADTSGREEPP). Residues 1002–1094 (WKKEAAADTS…PLPVTTDLAL (93 aa)) form a disordered region. Phosphoserine is present on Ser1021. One can recognise a DAD domain in the interval 1049-1082 (SDRDGAIEDIITDLRNQPYIRADTGRRSARRRPP).

The protein belongs to the formin homology family. As to quaternary structure, interacts with RAC1, PFN1 and PFN2. Interacts (activated by RAC1) with SRGAP2 (via SH3 domain); regulates the actin filament severing activity of FMNL1. Myristoylation mediates membrane localization. Highly expressed in the spleen, lymph node and bone marrow cells.

Its subcellular location is the cytoplasm. It localises to the cell membrane. The protein resides in the cytoplasmic vesicle. The protein localises to the phagosome. Its function is as follows. Plays a role in the regulation of cell morphology and cytoskeletal organization. Required in the cortical actin filament dynamics and cell shape. May play a role in the control of cell motility and survival of macrophages. The sequence is that of Formin-like protein 1 (Fmnl1) from Mus musculus (Mouse).